Here is a 681-residue protein sequence, read N- to C-terminus: NADH-quinone oxidoreductase subunit G (681 aa).

The 78-residue stretch at 1 to 78 folds into the 2Fe-2S ferredoxin-type domain; it reads MIKLTIDGQE…GMVIHTDTPM (78 aa). The [2Fe-2S] cluster site is built by Cys-34, Cys-45, Cys-48, and Cys-62. A 4Fe-4S His(Cys)3-ligated-type domain is found at 78 to 117; sequence MVKKAREGVMEFLLVNHPLDCPICDQGGECDLQDQAFRYG. Positions 94, 98, 101, 107, 146, 149, 152, and 196 each coordinate [4Fe-4S] cluster. The 4Fe-4S Mo/W bis-MGD-type domain occupies 215-271; that stretch reads LRHTASIGVHDAEGSNIRIDSRGDEVMRVLPRVNEEINEEWLSDKNRFSYDGLKYQR.

This sequence belongs to the complex I 75 kDa subunit family. [2Fe-2S] cluster serves as cofactor. [4Fe-4S] cluster is required as a cofactor.

The catalysed reaction is a quinone + NADH + 5 H(+)(in) = a quinol + NAD(+) + 4 H(+)(out). Its function is as follows. NDH-1 shuttles electrons from NADH, via FMN and iron-sulfur (Fe-S) centers, to quinones in the respiratory chain. Couples the redox reaction to proton translocation (for every two electrons transferred, four hydrogen ions are translocated across the cytoplasmic membrane), and thus conserves the redox energy in a proton gradient. The protein is NADH-quinone oxidoreductase subunit G (nuoG) of Rickettsia bellii (strain RML369-C).